A 394-amino-acid chain; its full sequence is G2/mitotic-specific cyclin-B2 (394 aa).

The protein belongs to the cyclin family. Cyclin AB subfamily. As to quaternary structure, interacts with the CDK1 protein kinase to form a serine/threonine kinase holoenzyme complex also known as maturation promoting factor (MPF). The cyclin subunit imparts substrate specificity to the complex.

Essential for the control of the cell cycle at the G2/M (mitosis) transition. This Anguilla japonica (Japanese eel) protein is G2/mitotic-specific cyclin-B2 (ccnb2).